Consider the following 253-residue polypeptide: uncharacterized protein (253 aa).

Ala-2 is modified (N-acetylalanine).

The protein belongs to the NAD(P)-dependent epimerase/dehydratase family. Homodimer.

This is an uncharacterized protein from Arabidopsis thaliana (Mouse-ear cress).